Reading from the N-terminus, the 137-residue chain is Large ribosomal subunit protein uL16 (137 aa).

The protein belongs to the universal ribosomal protein uL16 family. Part of the 50S ribosomal subunit.

Its function is as follows. Binds 23S rRNA and is also seen to make contacts with the A and possibly P site tRNAs. In Oleidesulfovibrio alaskensis (strain ATCC BAA-1058 / DSM 17464 / G20) (Desulfovibrio alaskensis), this protein is Large ribosomal subunit protein uL16.